The primary structure comprises 372 residues: Peptide chain release factor 2 (372 aa).

Glutamine 253 carries the N5-methylglutamine modification.

The protein belongs to the prokaryotic/mitochondrial release factor family. Methylated by PrmC. Methylation increases the termination efficiency of RF2.

It localises to the cytoplasm. Its function is as follows. Peptide chain release factor 2 directs the termination of translation in response to the peptide chain termination codons UGA and UAA. The polypeptide is Peptide chain release factor 2 (Mycolicibacterium gilvum (strain PYR-GCK) (Mycobacterium gilvum (strain PYR-GCK))).